The sequence spans 201 residues: Adenylyl-sulfate kinase (201 aa).

35 to 42 serves as a coordination point for ATP; sequence GLSGSGKS. Ser-109 serves as the catalytic Phosphoserine intermediate.

It belongs to the APS kinase family.

It catalyses the reaction adenosine 5'-phosphosulfate + ATP = 3'-phosphoadenylyl sulfate + ADP + H(+). It participates in sulfur metabolism; hydrogen sulfide biosynthesis; sulfite from sulfate: step 2/3. In terms of biological role, catalyzes the synthesis of activated sulfate. The protein is Adenylyl-sulfate kinase of Escherichia coli O139:H28 (strain E24377A / ETEC).